Consider the following 346-residue polypeptide: 4-hydroxy-2-oxovalerate aldolase (346 aa).

The region spanning 8–260 is the Pyruvate carboxyltransferase domain; the sequence is VTLHDMSLRD…ETGIDLYKIM (253 aa). 16 to 17 lines the substrate pocket; the sequence is RD. Aspartate 17 provides a ligand contact to Mn(2+). Residue histidine 20 is the Proton acceptor of the active site. Substrate contacts are provided by serine 170 and histidine 199. 2 residues coordinate Mn(2+): histidine 199 and histidine 201. Tyrosine 290 serves as a coordination point for substrate.

The protein belongs to the 4-hydroxy-2-oxovalerate aldolase family.

The enzyme catalyses (S)-4-hydroxy-2-oxopentanoate = acetaldehyde + pyruvate. This is 4-hydroxy-2-oxovalerate aldolase (nahM) from Stutzerimonas stutzeri (Pseudomonas stutzeri).